We begin with the raw amino-acid sequence, 312 residues long: Acetaldehyde dehydrogenase 4 (312 aa).

Residue 12–15 (SGNI) coordinates NAD(+). Cysteine 132 acts as the Acyl-thioester intermediate in catalysis. Residues 163 to 171 (SAGPGTRAN) and asparagine 290 contribute to the NAD(+) site.

Belongs to the acetaldehyde dehydrogenase family.

The enzyme catalyses acetaldehyde + NAD(+) + CoA = acetyl-CoA + NADH + H(+). The chain is Acetaldehyde dehydrogenase 4 from Azotobacter vinelandii (strain DJ / ATCC BAA-1303).